Here is a 667-residue protein sequence, read N- to C-terminus: Long-chain fatty acid transport protein 3 (667 aa).

A helical transmembrane segment spans residues 3-23; that stretch reads ALLLLLPLLLLLPLLLKLDVW. The segment at 114 to 144 is disordered; the sequence is TGGRRGSGRGSTEEGARVAPPAGDAAARGTT. The segment covering 130-144 has biased composition (low complexity); the sequence is RVAPPAGDAAARGTT. Residues 272-276, H315, T412, D512, R527, and K619 contribute to the ATP site; that span reads TSGTT.

This sequence belongs to the ATP-dependent AMP-binding enzyme family. Expressed at high levels in adrenal gland, testis and ovary. Expressed at lower levels in adult brain. Found in adrenal cortical cells, spermatocytes and interstitial cells of the testis, theca cells of the ovary, cerebral cortical neurons, and cerebellar Purkinje cells (at protein level).

The protein localises to the mitochondrion membrane. The enzyme catalyses a fatty acid(in) = a fatty acid(out). It carries out the reaction a long-chain fatty acid + ATP + CoA = a long-chain fatty acyl-CoA + AMP + diphosphate. The catalysed reaction is (5Z,8Z,11Z,14Z)-eicosatetraenoate + ATP + CoA = (5Z,8Z,11Z,14Z)-eicosatetraenoyl-CoA + AMP + diphosphate. It catalyses the reaction hexadecanoate + ATP + CoA = hexadecanoyl-CoA + AMP + diphosphate. The enzyme catalyses (9Z)-octadecenoate + ATP + CoA = (9Z)-octadecenoyl-CoA + AMP + diphosphate. It carries out the reaction (9Z,12Z)-octadecadienoate + ATP + CoA = (9Z,12Z)-octadecadienoyl-CoA + AMP + diphosphate. The catalysed reaction is a very long-chain fatty acid + ATP + CoA = a very long-chain fatty acyl-CoA + AMP + diphosphate. It catalyses the reaction tetracosanoate + ATP + CoA = tetracosanoyl-CoA + AMP + diphosphate. Functionally, mainly functions as an acyl-CoA ligase catalyzing the ATP-dependent formation of fatty acyl-CoA using LCFA and very-long-chain fatty acids (VLCFA) as substrates. Can mediate the levels of long-chain fatty acids (LCFA) in the cell by facilitating their transport across membranes. This chain is Long-chain fatty acid transport protein 3 (Slc27a3), found in Mus musculus (Mouse).